The following is a 356-amino-acid chain: S-adenosylmethionine:tRNA ribosyltransferase-isomerase (356 aa).

This sequence belongs to the QueA family. Monomer.

The protein localises to the cytoplasm. It carries out the reaction 7-aminomethyl-7-carbaguanosine(34) in tRNA + S-adenosyl-L-methionine = epoxyqueuosine(34) in tRNA + adenine + L-methionine + 2 H(+). It participates in tRNA modification; tRNA-queuosine biosynthesis. Functionally, transfers and isomerizes the ribose moiety from AdoMet to the 7-aminomethyl group of 7-deazaguanine (preQ1-tRNA) to give epoxyqueuosine (oQ-tRNA). This is S-adenosylmethionine:tRNA ribosyltransferase-isomerase from Xanthomonas euvesicatoria pv. vesicatoria (strain 85-10) (Xanthomonas campestris pv. vesicatoria).